We begin with the raw amino-acid sequence, 405 residues long: Protein held out wings (405 aa).

Positions 142-210 (YVPVREHPDF…HLSDDLHVLI (69 aa)) constitute a KH domain.

As to quaternary structure, homodimer. Interacts with Sxl; promoting nuclear retention of msl-2 transcripts. As to expression, during embryogenesis, expression is seen in mesodermal precursors of somatic, visceral and pharyngeal muscle. Later in embryogenesis, expression is restricted to heart and muscle attachment sites of the epidermis. During onset of metamorphosis, expression is seen in muscle and muscle attachment cells.

The protein resides in the nucleus. RNA-binding protein involved in muscle development and dosage compensation. Vital role in steroid regulation of muscle development and to control heart rate. Required during embryogenesis, in late stages of somatic muscle development, for myotube migration and during metamorphosis for muscle reorganization. Required for integrin-mediated cell-adhesion in wing blade. Together with Sxl, acts as an inhibitor of dosage compensation in females by preventing production of msl-2 protein, an essential component of the MSL complex. Specifically binds to the 5'-UTR of msl-2 transcripts and cooperates with Sxl to promote nuclear retention of msl-2 mRNAs. This Drosophila melanogaster (Fruit fly) protein is Protein held out wings (how).